A 419-amino-acid polypeptide reads, in one-letter code: UDP-N-acetylmuramoylalanine--D-glutamate ligase (419 aa).

ATP is bound at residue 109–115 (GSTGKTT).

This sequence belongs to the MurCDEF family.

It is found in the cytoplasm. The enzyme catalyses UDP-N-acetyl-alpha-D-muramoyl-L-alanine + D-glutamate + ATP = UDP-N-acetyl-alpha-D-muramoyl-L-alanyl-D-glutamate + ADP + phosphate + H(+). It participates in cell wall biogenesis; peptidoglycan biosynthesis. Cell wall formation. Catalyzes the addition of glutamate to the nucleotide precursor UDP-N-acetylmuramoyl-L-alanine (UMA). This chain is UDP-N-acetylmuramoylalanine--D-glutamate ligase, found in Chlamydia felis (strain Fe/C-56) (Chlamydophila felis).